The primary structure comprises 239 residues: Ribonuclease HII (239 aa).

Positions Lys-18–Glu-231 constitute an RNase H type-2 domain. Positions 24, 25, and 125 each coordinate a divalent metal cation.

It belongs to the RNase HII family. Mn(2+) serves as cofactor. Requires Mg(2+) as cofactor.

Its subcellular location is the cytoplasm. The catalysed reaction is Endonucleolytic cleavage to 5'-phosphomonoester.. In terms of biological role, endonuclease that specifically degrades the RNA of RNA-DNA hybrids. The protein is Ribonuclease HII of Methanococcus maripaludis (strain C6 / ATCC BAA-1332).